A 918-amino-acid chain; its full sequence is Isoleucine--tRNA ligase (918 aa).

The 'HIGH' region signature appears at 57 to 67; it reads PYANGDIHIGH. Position 568 (Glu568) interacts with L-isoleucyl-5'-AMP. The 'KMSKS' region signature appears at 609–613; that stretch reads KMSKS. Lys612 contributes to the ATP binding site. Residues Cys894, Cys897, Cys909, and Cys912 each coordinate Zn(2+).

It belongs to the class-I aminoacyl-tRNA synthetase family. IleS type 1 subfamily. In terms of assembly, monomer. Requires Zn(2+) as cofactor.

The protein localises to the cytoplasm. It catalyses the reaction tRNA(Ile) + L-isoleucine + ATP = L-isoleucyl-tRNA(Ile) + AMP + diphosphate. Its function is as follows. Catalyzes the attachment of isoleucine to tRNA(Ile). As IleRS can inadvertently accommodate and process structurally similar amino acids such as valine, to avoid such errors it has two additional distinct tRNA(Ile)-dependent editing activities. One activity is designated as 'pretransfer' editing and involves the hydrolysis of activated Val-AMP. The other activity is designated 'posttransfer' editing and involves deacylation of mischarged Val-tRNA(Ile). The protein is Isoleucine--tRNA ligase of Sulfurovum sp. (strain NBC37-1).